The following is a 471-amino-acid chain: Replication factor C large subunit (471 aa).

44 to 51 (GSPGIGKT) provides a ligand contact to ATP. Positions 422-431 (RTDAAVDHSE) are enriched in basic and acidic residues. The interval 422–471 (RTDAAVDHSEGAFAGAVREDNTDEDSAADETTDGDEDTGADSQRGLDEFF) is disordered. Residues 442–460 (NTDEDSAADETTDGDEDTG) are compositionally biased toward acidic residues.

This sequence belongs to the activator 1 small subunits family. RfcL subfamily. As to quaternary structure, heteromultimer composed of small subunits (RfcS) and large subunits (RfcL).

In terms of biological role, part of the RFC clamp loader complex which loads the PCNA sliding clamp onto DNA. The polypeptide is Replication factor C large subunit (Halobacterium salinarum (strain ATCC 29341 / DSM 671 / R1)).